Reading from the N-terminus, the 138-residue chain is Basic phospholipase A2 homolog Ts-K49a (138 aa).

Positions 1-16 are cleaved as a signal peptide; the sequence is MRTLWIMAVLLLGVEG. Disulfide bonds link Cys42–Cys131, Cys44–Cys60, Cys59–Cys111, Cys65–Cys138, Cys66–Cys104, Cys73–Cys97, and Cys91–Cys102. The segment at 121–133 is important for membrane-damaging activities in eukaryotes and bacteria; heparin-binding; the sequence is KKKKINLKLFCKK.

In terms of tissue distribution, expressed by the venom gland.

The protein localises to the secreted. Its function is as follows. Snake venom phospholipase A2 homolog that lacks catalytic activity. It shows myotoxic and weak anticoagulant activities and induces local edema a few hours after injection (5-10 ug) in the hind paw. A model of myotoxic mechanism has been proposed: an apo Lys49-PLA2 is activated by the entrance of a hydrophobic molecule (e.g. fatty acid) at the hydrophobic channel of the protein leading to a reorientation of a monomer. This reorientation causes a transition between 'inactive' to 'active' states, causing alignment of C-terminal and membrane-docking sites (MDoS) side-by-side and putting the membrane-disruption sites (MDiS) in the same plane, exposed to solvent and in a symmetric position for both monomers. The MDoS region stabilizes the toxin on membrane by the interaction of charged residues with phospholipid head groups. Subsequently, the MDiS region destabilizes the membrane with penetration of hydrophobic residues. This insertion causes a disorganization of the membrane, allowing an uncontrolled influx of ions (i.e. calcium and sodium), and eventually triggering irreversible intracellular alterations and cell death. In Trimeresurus stejnegeri (Chinese green tree viper), this protein is Basic phospholipase A2 homolog Ts-K49a.